The primary structure comprises 268 residues: Small ribosomal subunit protein eS1 (268 aa).

Belongs to the eukaryotic ribosomal protein eS1 family. As to quaternary structure, component of the small ribosomal subunit. Mature ribosomes consist of a small (40S) and a large (60S) subunit. The 40S subunit contains about 33 different proteins and 1 molecule of RNA (18S). The 60S subunit contains about 49 different proteins and 3 molecules of RNA (28S, 5.8S and 5S).

Its subcellular location is the cytoplasm. This is Small ribosomal subunit protein eS1 from Artemia franciscana (Brine shrimp).